The primary structure comprises 433 residues: uncharacterized protein (433 aa).

Residues 61–178 enclose the HD domain; the sequence is RFNHSLGVYE…QIDADRMDYL (118 aa).

This is an uncharacterized protein from Bacillus subtilis (strain 168).